Reading from the N-terminus, the 385-residue chain is NADH-quinone oxidoreductase subunit D 2 (385 aa).

It belongs to the complex I 49 kDa subunit family. NDH-1 is composed of 14 different subunits. Subunits NuoB, C, D, E, F, and G constitute the peripheral sector of the complex.

It is found in the cell membrane. It catalyses the reaction a quinone + NADH + 5 H(+)(in) = a quinol + NAD(+) + 4 H(+)(out). In terms of biological role, NDH-1 shuttles electrons from NADH, via FMN and iron-sulfur (Fe-S) centers, to quinones in the respiratory chain. The immediate electron acceptor for the enzyme in this species is believed to be a menaquinone. Couples the redox reaction to proton translocation (for every two electrons transferred, four hydrogen ions are translocated across the cytoplasmic membrane), and thus conserves the redox energy in a proton gradient. In Salinispora arenicola (strain CNS-205), this protein is NADH-quinone oxidoreductase subunit D 2.